The sequence spans 174 residues: Extracellular cysteine protease (174 aa).

Active-site residues include Cys-24, His-120, and Asn-141.

Belongs to the peptidase C47 family. In terms of processing, proteolytically cleaved.

It is found in the secreted. The protein localises to the cell wall. With respect to regulation, inhibited by heavy metal ions such as Zn(2+) or Ni(2+), iodoacetamide, N-ethylmaleimide, leupeptin, SDS and E-64. Also inhibited by chloromethylketones TPCK and TLCK and by human plasma inhibitor alpha-2-macroglobulin. Stimulated by L-cysteine. Functionally, cysteine protease able to cleave elastin, insulin, myoglobin, fibronectin, fibrinogen, HMW-kininogen, alpha-1-protease inhibitor and alpha-1-antitrypsin. Along with other extracellular proteases may contribute to the colonization and infection of human tissues. The chain is Extracellular cysteine protease (ecpA) from Staphylococcus epidermidis.